A 198-amino-acid polypeptide reads, in one-letter code: Guanylate kinase (198 aa).

The region spanning 4 to 186 is the Guanylate kinase-like domain; the sequence is PRPVVLSGPS…AYATLKQALS (183 aa). 14–19 serves as a coordination point for ATP; the sequence is GAGKST. Position 37-51 (37-51) interacts with substrate; that stretch reads SHTTRNPRPGEEDGK. Catalysis depends on residues Arg44, Arg137, and Arg148. Residue 171–172 coordinates ATP; it reads ND.

It belongs to the guanylate kinase family. Monomer. Interacts with RD3. Widely expressed. In retina is expressed in inner segment, outer nuclear layer, outer plexiform layer, inner plexiform layer, and ganglion cell layer (at protein level).

It localises to the photoreceptor inner segment. The protein resides in the cytoplasm. It is found in the cytosol. Its subcellular location is the mitochondrion. It carries out the reaction GMP + ATP = GDP + ADP. Its function is as follows. Catalyzes the phosphorylation of GMP to GDP. Essential enzyme for recycling GMP and indirectly, cyclic GMP (cGMP). Involved in the cGMP metabolism in photoreceptors. The polypeptide is Guanylate kinase (Mus musculus (Mouse)).